The following is a 411-amino-acid chain: MTFIEEFIYKGYLHQCTDLDQLTAITQEVKIAAYIGFDCTATSLHIGSLMQIMILRLLQKHGHTPIVIIGGGTSKIGDPSGKEVTRKALTQEDIKRNTAGIKKSLSKFIKFGKDQGDAIILDNAEWLDSLNYLDFLRDFGRHFSVNRMLTMDSVKLRLERSHHLSFLELNYMLLQAYDFYYLSKHYNCILQLGGSDQWGNIVIGADLIRRISGKEVFGMTTPLLTTASGAKMGKTAAGAVWLNEDLLSPYDYYQYWRNCEDADVIRFAKLYSELDIIELNKFEHLVSEDINAAKKQLAYELTKLCHGERLAKLALETAVRIFEQGDIDENLHTFILAPEILQAGISAYKLFYNVNLARSKSEARKIIRGKGAKINDQLVEDENMTIDTNFLLDKKVIKLSVGKKRHILVKV.

Tyr-34 provides a ligand contact to L-tyrosine. Positions 39–48 (CTATSLHIGS) match the 'HIGH' region motif. Residues Tyr-171 and Gln-175 each coordinate L-tyrosine. The short motif at 231–235 (KMGKT) is the 'KMSKS' region element. Lys-234 serves as a coordination point for ATP. An S4 RNA-binding domain is found at 345–411 (ISAYKLFYNV…GKKRHILVKV (67 aa)).

The protein belongs to the class-I aminoacyl-tRNA synthetase family. TyrS type 1 subfamily. In terms of assembly, homodimer.

Its subcellular location is the cytoplasm. It carries out the reaction tRNA(Tyr) + L-tyrosine + ATP = L-tyrosyl-tRNA(Tyr) + AMP + diphosphate + H(+). Functionally, catalyzes the attachment of tyrosine to tRNA(Tyr) in a two-step reaction: tyrosine is first activated by ATP to form Tyr-AMP and then transferred to the acceptor end of tRNA(Tyr). The chain is Tyrosine--tRNA ligase from Rickettsia typhi (strain ATCC VR-144 / Wilmington).